The chain runs to 160 residues: Transcription factor 12 (160 aa).

A disordered region spans residues 1–58; sequence NKEKDENLHEPPSSDDMKSDDESSQKDIKVSSRGRTSTNEDEDLNPEQKIEREKERRM. Positions 15–30 are enriched in basic and acidic residues; it reads DDMKSDDESSQKDIKV. The residue at position 19 (Ser19) is a Phosphoserine. Lys29 participates in a covalent cross-link: Glycyl lysine isopeptide (Lys-Gly) (interchain with G-Cter in SUMO2). Phosphothreonine is present on Thr36. Ser37 carries the post-translational modification Phosphoserine. Residues 46-58 show a composition bias toward basic and acidic residues; the sequence is PEQKIEREKERRM. Positions 55 to 108 constitute a bHLH domain; the sequence is ERRMANNARERLRVRDINEAFKELGRMCQLHLKSEKPQTKLLILHQAVAVILSL. Glycyl lysine isopeptide (Lys-Gly) (interchain with G-Cter in SUMO2) cross-links involve residues Lys87 and Lys131. The class A specific domain stretch occupies residues 110–133; it reads QQVRERNLNPKAACLKRREEEKVS. Residues 132–160 form a disordered region; sequence VSVVSAEPPTTLPGTHPGLSETTNPMGHM. Low complexity predominate over residues 139–150; it reads PPTTLPGTHPGL. Polar residues predominate over residues 151–160; that stretch reads SETTNPMGHM.

Efficient DNA binding requires dimerization with another bHLH protein. Forms homo- or heterooligomers with myogenin, E12 and ITF2 proteins. Interacts with PTF1A. Interacts with RUNX1T1. Interacts with NEUROD2. Interacts with BHLHA9.

The protein localises to the nucleus. Transcriptional regulator. Involved in the initiation of neuronal differentiation. Activates transcription by binding to the E box (5'-CANNTG-3'). May be involved in the functional network that regulates the development of the GnRH axis. This Papio hamadryas (Hamadryas baboon) protein is Transcription factor 12 (TCF12).